Consider the following 546-residue polypeptide: Probable protein kinase UbiB (546 aa).

The Protein kinase domain maps to 124–502; the sequence is DFDIQPLASA…HVRQSQSRYL (379 aa). Residues 130-138 and lysine 153 contribute to the ATP site; that span reads LASASIAQV. The active-site Proton acceptor is the aspartate 288. 2 consecutive transmembrane segments (helical) span residues 501 to 521 and 522 to 542; these read YLLGIGATLLLSGSFLLVNRP and EWGLMPSWLMVGGVVVWLVGW.

This sequence belongs to the ABC1 family. UbiB subfamily.

The protein localises to the cell inner membrane. It participates in cofactor biosynthesis; ubiquinone biosynthesis [regulation]. Is probably a protein kinase regulator of UbiI activity which is involved in aerobic coenzyme Q (ubiquinone) biosynthesis. The polypeptide is Probable protein kinase UbiB (Salmonella gallinarum (strain 287/91 / NCTC 13346)).